The sequence spans 116 residues: uncharacterized protein (116 aa).

Residues 6–83 (ATVHVGNLAP…RCIRVSPANF (78 aa)) form the RRM domain.

It localises to the cytoplasm. It is found in the nucleus. This is an uncharacterized protein from Schizosaccharomyces pombe (strain 972 / ATCC 24843) (Fission yeast).